Here is a 178-residue protein sequence, read N- to C-terminus: Large ribosomal subunit protein uL5 (178 aa).

The protein belongs to the universal ribosomal protein uL5 family. In terms of assembly, part of the 50S ribosomal subunit; part of the 5S rRNA/L5/L18/L25 subcomplex. Contacts the 5S rRNA and the P site tRNA. Forms a bridge to the 30S subunit in the 70S ribosome.

In terms of biological role, this is one of the proteins that bind and probably mediate the attachment of the 5S RNA into the large ribosomal subunit, where it forms part of the central protuberance. In the 70S ribosome it contacts protein S13 of the 30S subunit (bridge B1b), connecting the 2 subunits; this bridge is implicated in subunit movement. Contacts the P site tRNA; the 5S rRNA and some of its associated proteins might help stabilize positioning of ribosome-bound tRNAs. The chain is Large ribosomal subunit protein uL5 from Psychrobacter cryohalolentis (strain ATCC BAA-1226 / DSM 17306 / VKM B-2378 / K5).